A 171-amino-acid polypeptide reads, in one-letter code: Shikimate kinase (171 aa).

14–19 (GAGKST) contributes to the ATP binding site. Residue Ser18 coordinates Mg(2+). The substrate site is built by Asp36, Arg60, and Gly82. Arg120 serves as a coordination point for ATP. Arg139 lines the substrate pocket. Gln156 serves as a coordination point for ATP.

The protein belongs to the shikimate kinase family. Monomer. Mg(2+) is required as a cofactor.

The protein localises to the cytoplasm. The catalysed reaction is shikimate + ATP = 3-phosphoshikimate + ADP + H(+). It participates in metabolic intermediate biosynthesis; chorismate biosynthesis; chorismate from D-erythrose 4-phosphate and phosphoenolpyruvate: step 5/7. Functionally, catalyzes the specific phosphorylation of the 3-hydroxyl group of shikimic acid using ATP as a cosubstrate. The chain is Shikimate kinase from Shewanella loihica (strain ATCC BAA-1088 / PV-4).